We begin with the raw amino-acid sequence, 495 residues long: MDFDFLTIAIGFLFTITLYQALNFFSRKSKNLPPGPSPLPLIGNLHLLGDQPHKSLAKLAKKHGPIMGLQLGQVTTIVVTSSGMAKEVLQKQDLAFSSRSIPNAIHAHDQYKYSVIWLPVASRWRGLRKALNSNMFSGNRLDANQHLRSRKVQELIAYCRKSSQTGDAIDVGRAAFRTSLNLLSNTMFSKDLTDPYSDSAKEFKDLVWNVMVEAGKPNLVDYFPLLDKVDPQGIRKRMTIHFGKILELFGGLIDERLQQKKAKGVNDDVLDVLLTTSEESPEEIDRTHIQRMCLDLFVAGTDTTSSTLEWAMSEMLKNPEKMKAAQAELAQVIGKGKAVEEADLARLPYLRCAIKETLRIHPPVPLLIPRRTEQEVEVCGYTVPKNSQVLVNVWAISRDDAIWKDPLSFKPERFLESELEMRGKDFELIPFGAGRRICPGLPLAVRMVPVMLGSLLNSFDWKLEGGIAPKDLDMEEKFGITLQKAHPLRAVATPL.

A helical transmembrane segment spans residues 5–25; it reads FLTIAIGFLFTITLYQALNFF. Cys-438 contacts heme.

This sequence belongs to the cytochrome P450 family. Requires heme as cofactor. As to expression, expressed in leaves, stems and roots.

The protein localises to the endoplasmic reticulum membrane. It catalyses the reaction (2E)-geraniol + reduced [NADPH--hemoprotein reductase] + O2 = (6E)-8-hydroxygeraniol + oxidized [NADPH--hemoprotein reductase] + H2O + H(+). Its function is as follows. Hydroxylase involved in the biosynthesis of hydroxygeraniol, a precursor of the iridoid monoterpenoid swertiamarin. This is Geraniol 8-hydroxylase (CYP76B10) from Swertia mussotii (Felwort).